The sequence spans 239 residues: Ribonuclease 3 (239 aa).

Residues 12–137 enclose the RNase III domain; the sequence is RAKLEGLIGH…LIAAIYLDGG (126 aa). Glu50 contributes to the Mg(2+) binding site. Asp54 is a catalytic residue. Mg(2+)-binding residues include Asp123 and Glu126. Glu126 is an active-site residue. The DRBM domain occupies 162 to 231; the sequence is DAKTELQEWS…ATKMLEREGI (70 aa).

It belongs to the ribonuclease III family. Homodimer. The cofactor is Mg(2+).

It is found in the cytoplasm. The catalysed reaction is Endonucleolytic cleavage to 5'-phosphomonoester.. Functionally, digests double-stranded RNA. Involved in the processing of primary rRNA transcript to yield the immediate precursors to the large and small rRNAs (23S and 16S). Processes some mRNAs, and tRNAs when they are encoded in the rRNA operon. Processes pre-crRNA and tracrRNA of type II CRISPR loci if present in the organism. The sequence is that of Ribonuclease 3 from Rhizobium leguminosarum bv. trifolii (strain WSM2304).